The sequence spans 176 residues: Large ribosomal subunit protein uL6 (176 aa).

The span at 151–170 (RPPEPYKGKGVRYADEQVRR) shows a compositional bias: basic and acidic residues. Positions 151–176 (RPPEPYKGKGVRYADEQVRRKEAKKK) are disordered.

Belongs to the universal ribosomal protein uL6 family. As to quaternary structure, part of the 50S ribosomal subunit.

In terms of biological role, this protein binds to the 23S rRNA, and is important in its secondary structure. It is located near the subunit interface in the base of the L7/L12 stalk, and near the tRNA binding site of the peptidyltransferase center. This chain is Large ribosomal subunit protein uL6, found in Shewanella pealeana (strain ATCC 700345 / ANG-SQ1).